A 317-amino-acid polypeptide reads, in one-letter code: Fe-S cluster assembly protein dre2 (317 aa).

The segment at 22 to 152 (PVQAKRTLLL…KPNFEPSAAV (131 aa)) is N-terminal SAM-like domain. A linker region spans residues 153–209 (PLKFGLKKKNKPTPTAVPSIPTGFAAPMGIDSPVTNHDRDEDDELINEDTLLSEEDL). [2Fe-2S] cluster-binding residues include C219, C230, C233, and C235. The segment at 219–235 (CQPKTGRRRRACKDCTC) is fe-S binding site A. [4Fe-4S] cluster contacts are provided by C280, C283, C291, and C294. Short sequence motifs (cx2C motif) lie at residues 280–283 (CGSC) and 291–294 (CDGC). The fe-S binding site B stretch occupies residues 280-294 (CGSCALGDAFRCDGC).

The protein belongs to the anamorsin family. As to quaternary structure, monomer. Interacts with tah18. Interacts with mia40. [2Fe-2S] cluster serves as cofactor. It depends on [4Fe-4S] cluster as a cofactor.

The protein resides in the cytoplasm. The protein localises to the mitochondrion intermembrane space. Its function is as follows. Component of the cytosolic iron-sulfur (Fe-S) protein assembly (CIA) machinery required for the maturation of extramitochondrial Fe-S proteins. Part of an electron transfer chain functioning in an early step of cytosolic Fe-S biogenesis, facilitating the de novo assembly of a [4Fe-4S] cluster on the scaffold complex cfd1-nbp35. Electrons are transferred to dre2 from NADPH via the FAD- and FMN-containing protein tah18. Tah18-dre2 are also required for the assembly of the diferric tyrosyl radical cofactor of ribonucleotide reductase (RNR), probably by providing electrons for reduction during radical cofactor maturation in the catalytic small subunit rnr2. The sequence is that of Fe-S cluster assembly protein dre2 from Penicillium rubens (strain ATCC 28089 / DSM 1075 / NRRL 1951 / Wisconsin 54-1255) (Penicillium chrysogenum).